Consider the following 110-residue polypeptide: MVRRTGVTLLVVALVVVALVSSVSAQLNFSPGWGKRAAAGSGSSGGVGEAVSALHHSVGGAPGGVVPPGSSSSSGDSCGPIPVSAVMHIYRLIRNEAVRLVQCQDEEYLG.

Residues 1–25 form the signal peptide; that stretch reads MVRRTGVTLLVVALVVVALVSSVSA. A Pyrrolidone carboxylic acid modification is found at Gln26. Trp33 carries the post-translational modification Tryptophan amide.

The protein belongs to the AKH/HRTH/RPCH family.

It localises to the secreted. In terms of biological role, this hormone adapts the animal to light backgrounds by stimulating concentration of the pigment of its red body-chromatophores. In Carcinus maenas (Common shore crab), this protein is Red pigment-concentrating prohormone.